An 887-amino-acid polypeptide reads, in one-letter code: Semaphorin-6B (887 aa).

The signal sequence occupies residues Met1–Gly26. Residues Leu27–Ser605 lie on the Extracellular side of the membrane. The region spanning Pro32–Val525 is the Sema domain. An N-linked (GlcNAc...) asparagine glycan is attached at Asn75. 2 disulfide bridges follow: Cys117–Cys127 and Cys145–Cys154. N-linked (GlcNAc...) asparagine glycosylation is found at Asn156, Asn168, and Asn292. Cystine bridges form between Cys268–Cys379 and Cys293–Cys338. Asn387, Asn442, and Asn463 each carry an N-linked (GlcNAc...) asparagine glycan. Cystine bridges form between Cys487/Cys519, Cys528/Cys546, Cys534/Cys580, and Cys538/Cys554. A helical membrane pass occupies residues Val606–Leu626. The Cytoplasmic segment spans residues Arg627 to Pro887. Disordered regions lie at residues Leu656–Gly675, His697–Pro717, and Ala759–Pro887. Residues Thr662–Pro674 are compositionally biased toward gly residues. Omega-N-methylarginine is present on Arg667. The span at Leu707 to Pro717 shows a compositional bias: low complexity.

It belongs to the semaphorin family.

The protein localises to the cell membrane. Its function is as follows. Functions as a cell surface repellent for mossy fibers of developing neurons in the hippocampus where it plays a role in axon guidance. May function through the PLXNA4 receptor expressed by mossy cell axons. The protein is Semaphorin-6B (Sema6b) of Rattus norvegicus (Rat).